Reading from the N-terminus, the 358-residue chain is Small ribosomal subunit biogenesis GTPase RsgA 2 (358 aa).

Positions 106-261 (AEQLIAANVD…LIDTPGMREI (156 aa)) constitute a CP-type G domain. GTP is bound by residues 151–154 (SKAD) and 203–211 (GSSGVGKST). The Zn(2+) site is built by Cys284, Cys289, His291, and Cys297.

Belongs to the TRAFAC class YlqF/YawG GTPase family. RsgA subfamily. Monomer. Associates with 30S ribosomal subunit, binds 16S rRNA. It depends on Zn(2+) as a cofactor.

Its subcellular location is the cytoplasm. Its function is as follows. One of several proteins that assist in the late maturation steps of the functional core of the 30S ribosomal subunit. Helps release RbfA from mature subunits. May play a role in the assembly of ribosomal proteins into the subunit. Circularly permuted GTPase that catalyzes slow GTP hydrolysis, GTPase activity is stimulated by the 30S ribosomal subunit. The chain is Small ribosomal subunit biogenesis GTPase RsgA 2 from Vibrio parahaemolyticus serotype O3:K6 (strain RIMD 2210633).